The sequence spans 471 residues: Plasmepsin VII (471 aa).

Residues 1–24 (MKSVYHHFAIIFFLKLFLCNCILS) form the signal peptide. One can recognise a Peptidase A1 domain in the interval 96–438 (YYGKIAIGEN…DKDNLQIGFV (343 aa)). Catalysis depends on residues aspartate 115 and aspartate 325.

It belongs to the peptidase A1 family.

It localises to the cytoplasm. The protein is Plasmepsin VII of Plasmodium berghei (strain Anka).